The primary structure comprises 541 residues: Long-chain-fatty-acid--CoA ligase (541 aa).

Threonine 184 provides a ligand contact to Mg(2+). Valine 231 and tryptophan 234 together coordinate ATP. 4 residues coordinate tetradecanoyl-AMP: glycine 302, glutamine 322, glycine 323, and threonine 327. The ATP site is built by glycine 323 and threonine 327. Glutamate 328 is a binding site for Mg(2+). Residues aspartate 418, lysine 435, lysine 439, and tryptophan 444 each contribute to the ATP site. Residues aspartate 418, lysine 435, and lysine 439 each contribute to the tetradecanoyl-AMP site.

This sequence belongs to the ATP-dependent AMP-binding enzyme family. In terms of assembly, forms a domain swapped homodimer. Requires Mg(2+) as cofactor.

It catalyses the reaction a long-chain fatty acid + ATP + CoA = a long-chain fatty acyl-CoA + AMP + diphosphate. The enzyme catalyses tetradecanoate + ATP + CoA = tetradecanoyl-CoA + AMP + diphosphate. The catalysed reaction is hexadecanoate + ATP + CoA = hexadecanoyl-CoA + AMP + diphosphate. Its pathway is lipid metabolism; fatty acid metabolism. Functionally, catalyzes the esterification of a number of long chain fatty acids with CoA, resulting in the formation of long-chain fatty acyl-CoA. Myristate (C14) is the most efficiently processed fatty acid, followed by palmitate (C16). Also catalyzes the esterification of stearate (C18) and laurate (C12), but at lower efficiency. Does not catalyze the esterification of the unsaturated fatty acids mysteroleic and palmitoleic acids in vitro. This Thermus thermophilus (strain ATCC 27634 / DSM 579 / HB8) protein is Long-chain-fatty-acid--CoA ligase.